The primary structure comprises 448 residues: Leukocyte immunoglobulin-like receptor subfamily B member 4 (448 aa).

A signal peptide spans 1–21 (MIPTFTALLCLGLSLGPRTHM). Over 22–259 (QAGPLPKPTL…PHSGLRRHWE (238 aa)) the chain is Extracellular. 2 consecutive Ig-like C2-type domains span residues 27–118 (PKPT…LVMT) and 124–218 (PTLS…LIVS). Intrachain disulfides connect Cys-49/Cys-98 and Cys-144/Cys-195. The disordered stretch occupies residues 217-248 (VSGSLEDPRPSPTRSVSTAAGPEDQPLMPTGS). A helical transmembrane segment spans residues 260–280 (VLIGVLVVSILLLSLLLFLLL). The Cytoplasmic portion of the chain corresponds to 281–448 (QHWRQGKHRT…PSVYATLAIH (168 aa)). The segment at 297–448 (DFQRPPGAAE…PSVYATLAIH (152 aa)) is disordered. The residue at position 319 (Ser-319) is a Phosphoserine. The span at 344–354 (MDTRQSPHDED) shows a compositional bias: basic and acidic residues. Residues 358-363 (VTYAKV) carry the ITIM motif 1 motif. The span at 384 to 398 (LDTKDRQAEEDRQMD) shows a compositional bias: basic and acidic residues. 2 consecutive short sequence motifs (ITIM motif) follow at residues 410–415 (VTYAQL) and 440–445 (SVYATL).

Interacts with PTPN6. Detected on monocytes, macrophages, dendritic cells, natural killer cells and B-cells (at protein level). Expressed in the lung.

It is found in the cell membrane. Functionally, inhibitory receptor involved in the down-regulation of the immune response and the development of immune tolerance. Receptor for FN1. Receptor for apolipoprotein APOE. Receptor for ALCAM/CD166. Inhibits receptor-mediated phosphorylation of cellular proteins and mobilization of intracellular calcium ions. Inhibits FCGR1A/CD64-mediated monocyte activation by inducing phosphatase-mediated down-regulation of the phosphorylation of multiple proteins including LCK, SYK, LAT and ERK, leading to a reduction in TNF production. This inhibition of monocyte activation occurs at least in part via binding to FN1. Inhibits T cell proliferation, inducing anergy, suppressing the differentiation of IFNG-producing CD8+ cytotoxic T cells and enhancing the generation of CD8+ T suppressor cells. Induces up-regulation of CD86 on dendritic cells. Interferes with TNFRSF5-signaling and NF-kappa-B up-regulation. This is Leukocyte immunoglobulin-like receptor subfamily B member 4 (LILRB4) from Homo sapiens (Human).